The primary structure comprises 54 residues: Large ribosomal subunit protein bL33 (54 aa).

It belongs to the bacterial ribosomal protein bL33 family.

The polypeptide is Large ribosomal subunit protein bL33 (Caldicellulosiruptor saccharolyticus (strain ATCC 43494 / DSM 8903 / Tp8T 6331)).